Consider the following 242-residue polypeptide: MSGFFITATDTEVGKTVVAGAIAGVFRELGYNVGVYKPLQSGHVASNPEGDAARLKVLSGVPTQENEICPYSIEEPLAPRLAMKRAGRVVKLKEITDYYNELLKEFNSLFVEGAGGLAVPYTEDALVIDFAKELQLPLIVVARPTLGTVNHTVLTIAYAKAHGLTVAGVILSGCKECEMERVQENKEMIEELSGVPVLGLLPFFEGEFTKEEVLESAKEYIMISKLEEFIQNESNVAGAPSI.

Position 12–17 (12–17) interacts with ATP; the sequence is EVGKTV. A Mg(2+)-binding site is contributed by T16. Residue K37 is part of the active site. Substrate is bound at residue S41. ATP-binding positions include D51 and 112-115; that span reads EGAG. D51 and E112 together coordinate Mg(2+).

It belongs to the dethiobiotin synthetase family. Homodimer. It depends on Mg(2+) as a cofactor.

It localises to the cytoplasm. It carries out the reaction (7R,8S)-7,8-diammoniononanoate + CO2 + ATP = (4R,5S)-dethiobiotin + ADP + phosphate + 3 H(+). It participates in cofactor biosynthesis; biotin biosynthesis; biotin from 7,8-diaminononanoate: step 1/2. In terms of biological role, catalyzes a mechanistically unusual reaction, the ATP-dependent insertion of CO2 between the N7 and N8 nitrogen atoms of 7,8-diaminopelargonic acid (DAPA, also called 7,8-diammoniononanoate) to form a ureido ring. The chain is ATP-dependent dethiobiotin synthetase BioD from Bacillus cereus (strain G9842).